The primary structure comprises 607 residues: Pescadillo homolog (607 aa).

The BRCT domain maps to 320 to 413 (KLKNLFKGLK…KLLPVNKYLI (94 aa)). The disordered stretch occupies residues 486-607 (EALNSGALEE…KTQRKEILAK (122 aa)). Residues 495 to 511 (EAPEEEDDDEEAPEEDE) show a composition bias toward acidic residues. The span at 530 to 549 (IFKENPSEQKKLTKQEEALR) shows a compositional bias: basic and acidic residues. Residues 551 to 562 (RMVKSRHKKLYR) are compositionally biased toward basic residues. Over residues 563-607 (KMLEKQKKQTKEANLLKEKRQQIDKKQRVEQTQKRKTQRKEILAK) the composition is skewed to basic and acidic residues.

It belongs to the pescadillo family.

Its subcellular location is the nucleus. It is found in the nucleolus. The protein localises to the nucleoplasm. Required for maturation of ribosomal RNAs and formation of the large ribosomal subunit. The polypeptide is Pescadillo homolog (Culex quinquefasciatus (Southern house mosquito)).